Here is a 330-residue protein sequence, read N- to C-terminus: Malate dehydrogenase (330 aa).

12 to 18 (GAAGQIG) contacts NAD(+). Substrate is bound by residues arginine 93 and arginine 99. Residues asparagine 106, glutamine 113, and 130-132 (VGN) each bind NAD(+). 2 residues coordinate substrate: asparagine 132 and arginine 163. Histidine 188 acts as the Proton acceptor in catalysis.

Belongs to the LDH/MDH superfamily. MDH type 2 family.

The catalysed reaction is (S)-malate + NAD(+) = oxaloacetate + NADH + H(+). In terms of biological role, catalyzes the reversible oxidation of malate to oxaloacetate. This chain is Malate dehydrogenase, found in Legionella pneumophila subsp. pneumophila (strain Philadelphia 1 / ATCC 33152 / DSM 7513).